We begin with the raw amino-acid sequence, 228 residues long: LexA repressor (228 aa).

The H-T-H motif DNA-binding region spans 28–48; it reads IREIGEALDIRSTNGVNDHLK. Residues Ser-146 and Lys-183 each act as for autocatalytic cleavage activity in the active site.

The protein belongs to the peptidase S24 family. In terms of assembly, homodimer.

It catalyses the reaction Hydrolysis of Ala-|-Gly bond in repressor LexA.. In terms of biological role, represses a number of genes involved in the response to DNA damage (SOS response), including recA and lexA. In the presence of single-stranded DNA, RecA interacts with LexA causing an autocatalytic cleavage which disrupts the DNA-binding part of LexA, leading to derepression of the SOS regulon and eventually DNA repair. The sequence is that of LexA repressor from Anaeromyxobacter dehalogenans (strain 2CP-1 / ATCC BAA-258).